The sequence spans 238 residues: Urease accessory protein UreG (238 aa).

Positions 1–15 (MPPHLIDGEPHDHAH) are enriched in basic and acidic residues. Residues 1–27 (MPPHLIDGEPHDHAHDRPKRQRTPGEP) are disordered. 34–41 (GPVGSGKT) provides a ligand contact to GTP.

It belongs to the SIMIBI class G3E GTPase family. UreG subfamily. As to quaternary structure, homodimer. UreD, UreF and UreG form a complex that acts as a GTP-hydrolysis-dependent molecular chaperone, activating the urease apoprotein by helping to assemble the nickel containing metallocenter of UreC. The UreE protein probably delivers the nickel.

The protein localises to the cytoplasm. Its function is as follows. Facilitates the functional incorporation of the urease nickel metallocenter. This process requires GTP hydrolysis, probably effectuated by UreG. This chain is Urease accessory protein UreG, found in Nocardia farcinica (strain IFM 10152).